We begin with the raw amino-acid sequence, 317 residues long: Methionyl-tRNA formyltransferase (317 aa).

Residue 109–112 coordinates (6S)-5,6,7,8-tetrahydrofolate; the sequence is SLLP.

The protein belongs to the Fmt family.

It catalyses the reaction L-methionyl-tRNA(fMet) + (6R)-10-formyltetrahydrofolate = N-formyl-L-methionyl-tRNA(fMet) + (6S)-5,6,7,8-tetrahydrofolate + H(+). Functionally, attaches a formyl group to the free amino group of methionyl-tRNA(fMet). The formyl group appears to play a dual role in the initiator identity of N-formylmethionyl-tRNA by promoting its recognition by IF2 and preventing the misappropriation of this tRNA by the elongation apparatus. The protein is Methionyl-tRNA formyltransferase of Desulforamulus reducens (strain ATCC BAA-1160 / DSM 100696 / MI-1) (Desulfotomaculum reducens).